Reading from the N-terminus, the 1106-residue chain is Carbamoyl phosphate synthase large chain (1106 aa).

Residues 1–402 are carboxyphosphate synthetic domain; sequence MPRREDIRSV…SFQKALRSLE (402 aa). Residues arginine 129, arginine 169, glycine 175, glycine 176, glutamate 208, valine 210, glutamate 215, glycine 241, valine 242, histidine 243, glutamine 285, and glutamate 299 each contribute to the ATP site. Positions 133 to 328 constitute an ATP-grasp 1 domain; it reads KKAMEKIGVR…IAKIAALLSI (196 aa). Mg(2+)-binding residues include glutamine 285, glutamate 299, and asparagine 301. The Mn(2+) site is built by glutamine 285, glutamate 299, and asparagine 301. The interval 403–582 is oligomerization domain; the sequence is IDRYGFGSDG…YSSYDEEDES (180 aa). The tract at residues 583 to 964 is carbamoyl phosphate synthetic domain; sequence DVTNAKSVMI…AFLKSQYMAG (382 aa). The ATP-grasp 2 domain maps to 707–898; that stretch reads VEVLEKLKLN…IVKYATRIMM (192 aa). Arginine 743, serine 782, leucine 784, glutamate 789, glycine 814, isoleucine 815, histidine 816, serine 817, glutamine 857, and glutamate 869 together coordinate ATP. Mg(2+)-binding residues include glutamine 857, glutamate 869, and asparagine 871. Mn(2+)-binding residues include glutamine 857, glutamate 869, and asparagine 871. The MGS-like domain maps to 965 to 1106; it reads DELPSQGTVF…QEIHAMPKIL (142 aa). Residues 965 to 1106 are allosteric domain; sequence DELPSQGTVF…QEIHAMPKIL (142 aa).

It belongs to the CarB family. In terms of assembly, composed of two chains; the small (or glutamine) chain promotes the hydrolysis of glutamine to ammonia, which is used by the large (or ammonia) chain to synthesize carbamoyl phosphate. Tetramer of heterodimers (alpha,beta)4. Mg(2+) is required as a cofactor. Requires Mn(2+) as cofactor.

The catalysed reaction is hydrogencarbonate + L-glutamine + 2 ATP + H2O = carbamoyl phosphate + L-glutamate + 2 ADP + phosphate + 2 H(+). The enzyme catalyses hydrogencarbonate + NH4(+) + 2 ATP = carbamoyl phosphate + 2 ADP + phosphate + 2 H(+). It participates in amino-acid biosynthesis; L-arginine biosynthesis; carbamoyl phosphate from bicarbonate: step 1/1. The protein operates within pyrimidine metabolism; UMP biosynthesis via de novo pathway; (S)-dihydroorotate from bicarbonate: step 1/3. In terms of biological role, large subunit of the glutamine-dependent carbamoyl phosphate synthetase (CPSase). CPSase catalyzes the formation of carbamoyl phosphate from the ammonia moiety of glutamine, carbonate, and phosphate donated by ATP, constituting the first step of 2 biosynthetic pathways, one leading to arginine and/or urea and the other to pyrimidine nucleotides. The large subunit (synthetase) binds the substrates ammonia (free or transferred from glutamine from the small subunit), hydrogencarbonate and ATP and carries out an ATP-coupled ligase reaction, activating hydrogencarbonate by forming carboxy phosphate which reacts with ammonia to form carbamoyl phosphate. This Leptospira interrogans serogroup Icterohaemorrhagiae serovar copenhageni (strain Fiocruz L1-130) protein is Carbamoyl phosphate synthase large chain.